The sequence spans 331 residues: Putative heat stress transcription factor A-6a (331 aa).

A disordered region spans residues 135 to 160; the sequence is RRGAGTGSTTPRAVNCGGGGGEGEVE. Positions 156 to 238 form a coiled coil; that stretch reads EGEVERLRRD…VERKKRRMLA (83 aa). A hydrophobic repeat HR-A/B region spans residues 162–212; it reads LRRDKEALARELARLRRQQQEARAQLLDMERRVRGTERRQEQCTEFLARAL. A Nuclear localization signal motif is present at residues 230-235; that stretch reads ERKKRR. The Nuclear export signal motif lies at 246-253; that stretch reads LTFEALAL. An AHA1 motif is present at residues 270-279; it reads DMIWYELLGE. The short motif at 305–313 is the AHA2 element; it reads AEPWEEMGE.

The protein belongs to the HSF family. Class A subfamily. In terms of assembly, homotrimer. In terms of processing, exhibits temperature-dependent phosphorylation.

It localises to the cytoplasm. It is found in the nucleus. Its function is as follows. Transcriptional regulator that specifically binds DNA of heat shock promoter elements (HSE). The chain is Putative heat stress transcription factor A-6a (HSFA6A) from Oryza sativa subsp. japonica (Rice).